The primary structure comprises 662 residues: Methyl-accepting chemotaxis protein McpB (662 aa).

Over 1-16 (MKTFINWLKKPSISKK) the chain is Cytoplasmic. The chain crosses the membrane as a helical span at residues 17–37 (LIVSFIAILIIPILILEFSSY). Residues 38–282 (RSASGKLDQE…IKDASKSVLT (245 aa)) lie on the Extracellular side of the membrane. One can recognise a Cache domain in the interval 153–229 (VTDPYVAASD…KAGEKLSGDW (77 aa)). A helical transmembrane segment spans residues 283-303 (TGMIVLIASIVAGGILILFIV). Residues 304–356 (RSITKPLKRLVQSSKTISRGDLTETIEIHSKDELGELGESFNEMGQSLRSLIS) enclose the HAMP domain. The Cytoplasmic portion of the chain corresponds to 304–662 (RSITKPLKRL…RDLTKQFKIE (359 aa)). 2 positions are modified to glutamate methyl ester (Gln): Gln-371 and Gln-595. The 237-residue stretch at 375 to 611 (SAGQTSKATE…HVSAAVSGIA (237 aa)) folds into the Methyl-accepting transducer domain. Glu-630 and Glu-637 each carry glutamate methyl ester (Glu).

It belongs to the methyl-accepting chemotaxis (MCP) protein family. Interacts with FloT. Post-translationally, some glutamine residues are deamidated to glutamate by CheD and subsequently methylated. In terms of processing, the demethylation is selective. Gln-371 is demethylated only upon asparagine addition whereas Glu-637 is demethylated only upon asparagine removal. Glu-630 appears indiscriminate and is demethylated upon both addition and removal of asparagine.

The protein resides in the cell membrane. It localises to the membrane raft. In terms of biological role, chemotactic-signal transducers respond to changes in the concentration of attractants and repellents in the environment, transduce a signal from the outside to the inside of the cell, and facilitate sensory adaptation through the variation of the level of methylation. All amino acids serve as attractants in B.subtilis, they appear to cause an increase in the turnover methyl groups, leading to methylation of an unidentified acceptor, while repellents have been shown to cause a decrease in methyl group turnover. The methyl groups are added by a methyltransferase and removed by a methylesterase. McpB is required for taxis towards asparagine, aspartate, glutamine, and histidine. The protein is Methyl-accepting chemotaxis protein McpB (mcpB) of Bacillus subtilis (strain 168).